We begin with the raw amino-acid sequence, 258 residues long: Imidazole glycerol phosphate synthase subunit HisF (258 aa).

Catalysis depends on residues Asp-11 and Asp-130.

This sequence belongs to the HisA/HisF family. As to quaternary structure, heterodimer of HisH and HisF.

The protein localises to the cytoplasm. It catalyses the reaction 5-[(5-phospho-1-deoxy-D-ribulos-1-ylimino)methylamino]-1-(5-phospho-beta-D-ribosyl)imidazole-4-carboxamide + L-glutamine = D-erythro-1-(imidazol-4-yl)glycerol 3-phosphate + 5-amino-1-(5-phospho-beta-D-ribosyl)imidazole-4-carboxamide + L-glutamate + H(+). The protein operates within amino-acid biosynthesis; L-histidine biosynthesis; L-histidine from 5-phospho-alpha-D-ribose 1-diphosphate: step 5/9. Its function is as follows. IGPS catalyzes the conversion of PRFAR and glutamine to IGP, AICAR and glutamate. The HisF subunit catalyzes the cyclization activity that produces IGP and AICAR from PRFAR using the ammonia provided by the HisH subunit. In Xanthomonas campestris pv. campestris (strain B100), this protein is Imidazole glycerol phosphate synthase subunit HisF.